The sequence spans 142 residues: Large ribosomal subunit protein uL13 (142 aa).

The protein belongs to the universal ribosomal protein uL13 family. As to quaternary structure, part of the 50S ribosomal subunit.

This protein is one of the early assembly proteins of the 50S ribosomal subunit, although it is not seen to bind rRNA by itself. It is important during the early stages of 50S assembly. This chain is Large ribosomal subunit protein uL13, found in Paraburkholderia phytofirmans (strain DSM 17436 / LMG 22146 / PsJN) (Burkholderia phytofirmans).